The sequence spans 874 residues: Speckle targeted PIP5K1A-regulated poly(A) polymerase (874 aa).

A Matrin-type zinc finger spans residues 16–46; that stretch reads FRCCLCHVTTANRPSLDAHLGGRKHRHLVEL. The RRM domain occupies 56-128; the sequence is RSVFVSGFPR…HRLRVRPREQ (73 aa). The interval 113-146 is disordered; the sequence is QHSLGGHRLRVRPREQKEFQSPASKSPKGAAPDS. Position 205 (S205) interacts with ATP. Mg(2+)-binding residues include D216 and D218. 2 residues coordinate UTP: D216 and D218. Residues 252 to 334 form a disordered region; it reads QALACTPASP…ELAETPKEEK (83 aa). Pro residues predominate over residues 259 to 269; that stretch reads ASPPDSQPPAS. Residues 280–291 are compositionally biased toward polar residues; the sequence is TPSSSLAPQTPD. N392 lines the ATP pocket. The UTP site is built by N392, R414, Y432, and H549. The region spanning 491-549 is the PAP-associated domain; it reads LSSLLAQFFSCVSCWDLRGSLLSLREGQALPVAGGLPSNLWEGLRLGPLNLQDPFDLSH. The KA1; binds the bulging loops of U6 snRNA but is dispensable for terminal uridylyltransferase activity stretch occupies residues 598 to 874; sequence SSPSSLLSAT…FLPQAIRHLK (277 aa). 2 disordered regions span residues 638–662 and 705–761; these read ATKRTRSEGGGTGESSQGGTSKRLK and MQSP…ASLP. S750 bears the Phosphoserine mark.

It belongs to the DNA polymerase type-B-like family. Associates with the cleavage and polyadenylation specificity factor (CPSF) complex. Interacts with CPSF1 and CPSF3; the interaction is direct. Interacts with PIP5K1A. Requires Mg(2+) as cofactor. The cofactor is Mn(2+). In terms of processing, phosphorylated by CK1 in the proline-rich (Pro-rich) region. Widely expressed.

It localises to the nucleus. The protein localises to the nucleolus. It is found in the nucleus speckle. It carries out the reaction RNA(n) + UTP = RNA(n)-3'-uridine ribonucleotide + diphosphate. The catalysed reaction is RNA(n) + ATP = RNA(n)-3'-adenine ribonucleotide + diphosphate. Adenylyltransferase activity is specifically phosphatidylinositol 4,5-bisphosphate (PtdIns(4,5)P2). In terms of biological role, poly(A) polymerase that creates the 3'-poly(A) tail of specific pre-mRNAs. Localizes to nuclear speckles together with PIP5K1A and mediates polyadenylation of a select set of mRNAs, such as HMOX1. In addition to polyadenylation, it is also required for the 3'-end cleavage of pre-mRNAs: binds to the 3'UTR of targeted pre-mRNAs and promotes the recruitment and assembly of the CPSF complex on the 3'UTR of pre-mRNAs. In addition to adenylyltransferase activity, also has uridylyltransferase activity. However, the ATP ratio is higher than UTP in cells, suggesting that it functions primarily as a poly(A) polymerase. Acts as a specific terminal uridylyltransferase for U6 snRNA in vitro: responsible for a controlled elongation reaction that results in the restoration of the four 3'-terminal UMP-residues found in newly transcribed U6 snRNA. Not involved in replication-dependent histone mRNA degradation. The chain is Speckle targeted PIP5K1A-regulated poly(A) polymerase (TUT1) from Homo sapiens (Human).